A 309-amino-acid polypeptide reads, in one-letter code: 1,4-dihydroxy-2-naphthoyl-CoA synthase (309 aa).

Substrate-binding positions include R53, S98–Q102, Y110, W152–G156, T179, S185, Y282, and K297.

Belongs to the enoyl-CoA hydratase/isomerase family. MenB subfamily.

It catalyses the reaction 2-succinylbenzoyl-CoA + H(+) = 1,4-dihydroxy-2-naphthoyl-CoA + H2O. The protein operates within quinol/quinone metabolism; 1,4-dihydroxy-2-naphthoate biosynthesis; 1,4-dihydroxy-2-naphthoate from chorismate: step 6/7. It functions in the pathway quinol/quinone metabolism; menaquinone biosynthesis. Converts o-succinylbenzoyl-CoA (OSB-CoA) to 1,4-dihydroxy-2-naphthoyl-CoA (DHNA-CoA). This is 1,4-dihydroxy-2-naphthoyl-CoA synthase from Mycolicibacterium smegmatis (strain ATCC 700084 / mc(2)155) (Mycobacterium smegmatis).